Reading from the N-terminus, the 894-residue chain is UPF0182 protein GSU2333 (894 aa).

Helical transmembrane passes span 6-26 (FLLI…LITF), 50-70 (VGAG…NLYF), 98-118 (MVQM…LLAG), 162-182 (KGFV…VYFF), 203-223 (LAIL…LDAV), 250-270 (ILTL…WKGA), and 275-295 (LIPP…YPAM).

This sequence belongs to the UPF0182 family.

Its subcellular location is the cell membrane. The protein is UPF0182 protein GSU2333 of Geobacter sulfurreducens (strain ATCC 51573 / DSM 12127 / PCA).